Reading from the N-terminus, the 3661-residue chain is Serine/threonine-protein kinase SMG1 (3661 aa).

The span at methionine 1–serine 11 shows a compositional bias: low complexity. Disordered regions lie at residues methionine 1–arginine 101 and proline 116–serine 144. The interaction with SMG8 and SMG9 stretch occupies residues methionine 1–valine 1977. Positions asparagine 26–alanine 35 are enriched in polar residues. 2 stretches are compositionally biased toward basic and acidic residues: residues glutamine 69 to glycine 86 and alanine 129 to glutamate 138. N6-acetyllysine is present on lysine 173. The span at arginine 1154 to glycine 1165 shows a compositional bias: polar residues. Residues arginine 1154–proline 1175 form a disordered region. An FAT domain is found at arginine 1283–serine 1866. The stretch at alanine 1817 to serine 1852 is one HEAT repeat. The interval glutamate 1898–leucine 1919 is disordered. Residues valine 2124–phenylalanine 2463 enclose the PI3K/PI4K catalytic domain. The interval isoleucine 2130–lysine 2136 is G-loop. The catalytic loop stretch occupies residues glycine 2332–asparagine 2340. The activation loop stretch occupies residues histidine 2352–threonine 2376. Phosphothreonine is present on threonine 3550. Phosphoserine is present on residues serine 3556 and serine 3570. Polar residues predominate over residues alanine 3568–proline 3579. Residues alanine 3568 to lysine 3591 form a disordered region. Phosphothreonine is present on residues threonine 3573 and threonine 3577. One can recognise an FATC domain in the interval arginine 3629–valine 3661.

The protein belongs to the PI3/PI4-kinase family. Component of the SMG1C complex composed of SMG1, SMG8 and SMG9; the recruitment of SMG8 to SMG1 N-terminus induces a large conformational change in the SMG1 C-terminal head domain containing the catalytic domain. Component of the transient SURF (SMG1-UPF1-eRF1-eRF3) complex. Part of a complex composed of SMG1, DHX34 and UPF1; within the complex DHX34 acts as a scaffolding protein to facilitate SMG1 phosphorylation of UPF1. Interacts with PRKCI. Interacts with TELO2 and TTI1. Interacts with RUVBL1 and RUVBL2. Interacts with UPF2. Interacts with DHX34 (via C-terminus); the interaction is RNA-independent. The cofactor is Mn(2+). Post-translationally, autophosphorylated. In terms of tissue distribution, widely expressed, with highest level in heart and skeletal muscle. Expressed in placenta, brain, lung and spleen, but not in liver.

Its subcellular location is the nucleus. It is found in the cytoplasm. The enzyme catalyses L-seryl-[protein] + ATP = O-phospho-L-seryl-[protein] + ADP + H(+). It catalyses the reaction L-threonyl-[protein] + ATP = O-phospho-L-threonyl-[protein] + ADP + H(+). With respect to regulation, inhibited by caffeine, LY294002 and wortmannin. Serine/threonine protein kinase involved in both mRNA surveillance and genotoxic stress response pathways. Recognizes the substrate consensus sequence [ST]-Q. Plays a central role in nonsense-mediated decay (NMD) of mRNAs containing premature stop codons by phosphorylating UPF1/RENT1. Recruited by release factors to stalled ribosomes together with SMG8 and SMG9 (forming the SMG1C protein kinase complex), and UPF1 to form the transient SURF (SMG1-UPF1-eRF1-eRF3) complex. In EJC-dependent NMD, the SURF complex associates with the exon junction complex (EJC) through UPF2 and allows the formation of an UPF1-UPF2-UPF3 surveillance complex which is believed to activate NMD. Also acts as a genotoxic stress-activated protein kinase that displays some functional overlap with ATM. Can phosphorylate p53/TP53 and is required for optimal p53/TP53 activation after cellular exposure to genotoxic stress. Its depletion leads to spontaneous DNA damage and increased sensitivity to ionizing radiation (IR). May activate PRKCI but not PRKCZ. The protein is Serine/threonine-protein kinase SMG1 of Homo sapiens (Human).